The sequence spans 129 residues: MARKQQTRKRRVKKNIESGIAHIRSTFNNTIVTITDMQGNAVSWSSAGALGFRGSRKSTPFAAQMAAETAAKTSLEHGLKTLEVTVKGPGAGREAAIRALQAAGLEVTAIKDVTPVPHNGCRPPKRRRV.

This sequence belongs to the universal ribosomal protein uS11 family. In terms of assembly, part of the 30S ribosomal subunit. Interacts with proteins S7 and S18. Binds to IF-3.

In terms of biological role, located on the platform of the 30S subunit, it bridges several disparate RNA helices of the 16S rRNA. Forms part of the Shine-Dalgarno cleft in the 70S ribosome. The sequence is that of Small ribosomal subunit protein uS11 from Lysinibacillus sphaericus (strain C3-41).